The following is a 250-amino-acid chain: 5-oxoprolinase subunit A (250 aa).

The protein belongs to the LamB/PxpA family. In terms of assembly, forms a complex composed of PxpA, PxpB and PxpC.

The enzyme catalyses 5-oxo-L-proline + ATP + 2 H2O = L-glutamate + ADP + phosphate + H(+). Its function is as follows. Catalyzes the cleavage of 5-oxoproline to form L-glutamate coupled to the hydrolysis of ATP to ADP and inorganic phosphate. The sequence is that of 5-oxoprolinase subunit A from Staphylococcus haemolyticus (strain JCSC1435).